We begin with the raw amino-acid sequence, 728 residues long: FAD-dependent monooxygenase avaB (728 aa).

A helical membrane pass occupies residues 17–37 (VIDLLLTFFFYSGLYGLIAAK). The segment covering 50-64 (NQQCENTDDVPQSFQ) has biased composition (polar residues). The disordered stretch occupies residues 50–72 (NQQCENTDDVPQSFQRPRDTRST). Position 168 (Val-168) interacts with FAD. NADP(+) is bound at residue 490-491 (DL).

It belongs to the FAD-binding monooxygenase family. FAD serves as cofactor.

Its subcellular location is the membrane. It participates in secondary metabolite metabolism. In terms of biological role, multifunctional FAD-dependent monooxygenase; part of the cluster that mediates the biosynthesis of a highly modified cyclo-arginine-tryptophan dipeptide (cRW). Within the pathway, avaB uses the avaA cyclo-arginine-tryptophan dipeptide (cRW) as substrate to generate the cyclo-Arg-formylkynurenine diketopiperazine (DKP). AvaB also catalyzes an additional N-oxidation of the avaC product which is followed by cyclization and dehydration. The first step of the pathway is perfornmed by the arginine-containing cyclodipeptide synthase (RCPDS) avaA that acts as the scaffold-generating enzyme and is responsible for formation of the cyclo-Arg-Trp (cRW) diketopiperazine. AvaB then acts as a multifunctional flavoenzyme that is responsible for generating the cyclo-Arg-formylkynurenine DKP, which can be deformylated by avaC. AvaB then further catalyzes an additional N-oxidation followed by cyclization and dehydration. The next step is an N-acetylation of the guanidine group catalyzed by the arginine N-acetyltransferase avaD. The roles of the additional enzymes identified within the ava cluster still have to be determined. This Aspergillus versicolor protein is FAD-dependent monooxygenase avaB.